Here is an 89-residue protein sequence, read N- to C-terminus: Large ribosomal subunit protein bL27 (89 aa).

Positions 1–20 (MAHKKAGGSSRNGRDSESKR) are disordered.

This sequence belongs to the bacterial ribosomal protein bL27 family.

This Bartonella bacilliformis (strain ATCC 35685 / KC583 / Herrer 020/F12,63) protein is Large ribosomal subunit protein bL27.